Here is a 153-residue protein sequence, read N- to C-terminus: MAGRQHGSGRLWALGGAALGACLAGVATQLVEPSTAPPKPKPPPLTKETVVFWDMRLWHVVGIFSLFVLSIIITLCCVFNCRVPRTRKEIEARYLQRKAAKMYTDKLETVPPLNELTEIPGEDKKKKKKDSVDTVAIKVEEDEKNEAKKKGEK.

A signal peptide spans 1-28 (MAGRQHGSGRLWALGGAALGACLAGVAT). The Extracellular segment spans residues 29-58 (QLVEPSTAPPKPKPPPLTKETVVFWDMRLW). The chain crosses the membrane as a helical span at residues 59-79 (HVVGIFSLFVLSIIITLCCVF). Topologically, residues 80–153 (NCRVPRTRKE…KNEAKKKGEK (74 aa)) are cytoplasmic.

In terms of assembly, forms the MET channel composed of TMC (TMC1 or TMC2), TMIE, TOMT, CIB (CIB2 or CIB3), LHPL5 and PCDH15. As to expression, expressed in brain, kidney, liver, lung and cochlea.

It localises to the membrane. Its function is as follows. Auxiliary subunit of the mechanotransducer (MET) non-specific cation channel complex located at the tips of stereocilia of cochlear hair cells and that mediates sensory transduction in the auditory system. The MET complex is composed of two dimeric pore-forming ion-conducting transmembrane TMC (TMC1 or TMC2) subunits, and aided by several auxiliary proteins including LHFPL5, TMIE, CIB2/3 and TOMT, and the tip-link PCDH15. May contribute to the formation of the pore. In Mus musculus (Mouse), this protein is Transmembrane inner ear expressed protein (Tmie).